A 211-amino-acid polypeptide reads, in one-letter code: MAMEDREVMEARGAGESCPTLSKVAPVDSMPEGKPKASLDAEVPKLELPTLEENGICEDRDCPGPPRSLPPKSGPNAKGQAGDGPGLESVELPLPLETEHRNAMELEKVRMEFELTLLKYLHQENERQRQHEEVMEQLQQQQQQQQALPHQFSGSLQDLLLPQNQFAMFFYCFIFIHIIYVAKETVFFLFSKHYLFCLAAILLCLIKTLWS.

Basic and acidic residues-rich tracts occupy residues 1–10 (MAMEDREVME) and 31–45 (PEGK…EVPK). The segment at 1-90 (MAMEDREVME…AGDGPGLESV (90 aa)) is disordered. Pro residues predominate over residues 63–73 (PGPPRSLPPKS). A coiled-coil region spans residues 119-148 (KYLHQENERQRQHEEVMEQLQQQQQQQQAL). The next 2 helical transmembrane spans lie at 159–179 (LLLP…IHII) and 186–206 (VFFL…LCLI).

It is found in the membrane. The protein is Transmembrane protein 247 (Tmem247) of Mus musculus (Mouse).